A 394-amino-acid polypeptide reads, in one-letter code: Phosphoglycerate kinase (394 aa).

Substrate contacts are provided by residues 21 to 23 (DFN), Arg36, 59 to 62 (HLGR), Arg118, and Arg151. Ser183 is subject to Phosphoserine. ATP is bound by residues Lys201 and Gly292. A Phosphothreonine modification is found at Thr299. Residues Glu323 and 350-353 (GGDS) contribute to the ATP site.

This sequence belongs to the phosphoglycerate kinase family. As to quaternary structure, monomer.

The protein resides in the cytoplasm. The enzyme catalyses (2R)-3-phosphoglycerate + ATP = (2R)-3-phospho-glyceroyl phosphate + ADP. It functions in the pathway carbohydrate degradation; glycolysis; pyruvate from D-glyceraldehyde 3-phosphate: step 2/5. The protein is Phosphoglycerate kinase of Bacillus cereus (strain Q1).